The primary structure comprises 173 residues: Bifunctional protein PyrR (173 aa).

The PRPP-binding signature appears at 93-105 (VILVDDVLYTGRT).

Belongs to the purine/pyrimidine phosphoribosyltransferase family. PyrR subfamily. Homodimer and homohexamer; in equilibrium.

It catalyses the reaction UMP + diphosphate = 5-phospho-alpha-D-ribose 1-diphosphate + uracil. Functionally, regulates transcriptional attenuation of the pyrimidine nucleotide (pyr) operon by binding in a uridine-dependent manner to specific sites on pyr mRNA. This disrupts an antiterminator hairpin in the RNA and favors formation of a downstream transcription terminator, leading to a reduced expression of downstream genes. Its function is as follows. Also displays a weak uracil phosphoribosyltransferase activity which is not physiologically significant. This is Bifunctional protein PyrR from Streptococcus pneumoniae (strain 70585).